The sequence spans 559 residues: Urocanate hydratase (559 aa).

Residues 53–54, glutamine 131, 177–179, glutamate 197, arginine 202, 243–244, 264–268, 274–275, and tyrosine 323 each bind NAD(+); these read GG, GMG, NA, QTSAH, and YL. Cysteine 411 is a catalytic residue. Glycine 493 is a binding site for NAD(+).

It belongs to the urocanase family. The cofactor is NAD(+).

It localises to the cytoplasm. It carries out the reaction 4-imidazolone-5-propanoate = trans-urocanate + H2O. It functions in the pathway amino-acid degradation; L-histidine degradation into L-glutamate; N-formimidoyl-L-glutamate from L-histidine: step 2/3. Catalyzes the conversion of urocanate to 4-imidazolone-5-propionate. In Pseudomonas paraeruginosa (strain DSM 24068 / PA7) (Pseudomonas aeruginosa (strain PA7)), this protein is Urocanate hydratase.